The chain runs to 134 residues: Fluoride-specific ion channel FluC (134 aa).

A run of 4 helical transmembrane segments spans residues 7-27, 38-58, 69-89, and 110-130; these read LAVA…TIMA, GTLL…IVLV, LFLF…AAES, and VGSL…LLGH. Residues G77 and T80 each coordinate Na(+).

This sequence belongs to the fluoride channel Fluc/FEX (TC 1.A.43) family.

It is found in the cell inner membrane. The enzyme catalyses fluoride(in) = fluoride(out). Its activity is regulated as follows. Na(+) is not transported, but it plays an essential structural role and its presence is essential for fluoride channel function. Its function is as follows. Fluoride-specific ion channel. Important for reducing fluoride concentration in the cell, thus reducing its toxicity. The polypeptide is Fluoride-specific ion channel FluC (Legionella pneumophila subsp. pneumophila (strain Philadelphia 1 / ATCC 33152 / DSM 7513)).